Consider the following 79-residue polypeptide: Acyl carrier protein (79 aa).

Residues 2–77 (SDVLERVRKI…DAVKFIQERL (76 aa)) form the Carrier domain. O-(pantetheine 4'-phosphoryl)serine is present on serine 37.

This sequence belongs to the acyl carrier protein (ACP) family. 4'-phosphopantetheine is transferred from CoA to a specific serine of apo-ACP by AcpS. This modification is essential for activity because fatty acids are bound in thioester linkage to the sulfhydryl of the prosthetic group.

The protein localises to the cytoplasm. It functions in the pathway lipid metabolism; fatty acid biosynthesis. Carrier of the growing fatty acid chain in fatty acid biosynthesis. In Phenylobacterium zucineum (strain HLK1), this protein is Acyl carrier protein.